Consider the following 429-residue polypeptide: Adenylosuccinate synthetase (429 aa).

Residues 12–18 (GDEGKGK) and 40–42 (GHT) each bind GTP. Aspartate 13 serves as the catalytic Proton acceptor. Mg(2+) contacts are provided by aspartate 13 and glycine 40. IMP is bound by residues 13-16 (DEGK), 38-41 (NAGH), threonine 128, arginine 142, glutamine 223, threonine 238, and arginine 302. The active-site Proton donor is histidine 41. 298 to 304 (VNTGRPR) contributes to the substrate binding site. Residues arginine 304, 330-332 (KLD), and 412-414 (GVG) each bind GTP.

The protein belongs to the adenylosuccinate synthetase family. As to quaternary structure, homodimer. Mg(2+) is required as a cofactor.

The protein resides in the cytoplasm. It carries out the reaction IMP + L-aspartate + GTP = N(6)-(1,2-dicarboxyethyl)-AMP + GDP + phosphate + 2 H(+). The protein operates within purine metabolism; AMP biosynthesis via de novo pathway; AMP from IMP: step 1/2. Its function is as follows. Plays an important role in the de novo pathway of purine nucleotide biosynthesis. Catalyzes the first committed step in the biosynthesis of AMP from IMP. The sequence is that of Adenylosuccinate synthetase from Paenarthrobacter aurescens (strain TC1).